Reading from the N-terminus, the 266-residue chain is Putative carbamate hydrolase RutD (266 aa).

The protein belongs to the AB hydrolase superfamily. Hydrolase RutD family.

The catalysed reaction is carbamate + 2 H(+) = NH4(+) + CO2. Functionally, involved in pyrimidine catabolism. May facilitate the hydrolysis of carbamate, a reaction that can also occur spontaneously. The polypeptide is Putative carbamate hydrolase RutD (Escherichia coli O111:H- (strain 11128 / EHEC)).